Here is a 303-residue protein sequence, read N- to C-terminus: UDP-3-O-acyl-N-acetylglucosamine deacetylase (303 aa).

Residues H78, H237, and D241 each contribute to the Zn(2+) site. The active-site Proton donor is H264.

Belongs to the LpxC family. The cofactor is Zn(2+).

It catalyses the reaction a UDP-3-O-[(3R)-3-hydroxyacyl]-N-acetyl-alpha-D-glucosamine + H2O = a UDP-3-O-[(3R)-3-hydroxyacyl]-alpha-D-glucosamine + acetate. Its pathway is glycolipid biosynthesis; lipid IV(A) biosynthesis; lipid IV(A) from (3R)-3-hydroxytetradecanoyl-[acyl-carrier-protein] and UDP-N-acetyl-alpha-D-glucosamine: step 2/6. Functionally, catalyzes the hydrolysis of UDP-3-O-myristoyl-N-acetylglucosamine to form UDP-3-O-myristoylglucosamine and acetate, the committed step in lipid A biosynthesis. The polypeptide is UDP-3-O-acyl-N-acetylglucosamine deacetylase (Stenotrophomonas maltophilia (strain R551-3)).